The primary structure comprises 372 residues: Probable peptidoglycan glycosyltransferase FtsW (372 aa).

Topologically, residues 1 to 12 (MQKKSTISWSYD) are cytoplasmic. A helical transmembrane segment spans residues 13 to 33 (AWIVICTLSLLALGLLMVASA). The Periplasmic portion of the chain corresponds to 34-45 (SMVISDRQFGYP). The helical transmembrane segment at 46–66 (FHYFIRHLIYLSLGLTLAWVA) threads the bilayer. At 67–77 (SRVPIKVWKTY) the chain is on the cytoplasmic side. The chain crosses the membrane as a helical span at residues 78–98 (SGYLFLVGFLLLILVLAPVIG). Residues 99 to 109 (KTVNGSRRWIQ) lie on the Periplasmic side of the membrane. A helical membrane pass occupies residues 110-130 (LGFISLQVSEVVKFVTILYLA). The Cytoplasmic segment spans residues 131–142 (SFLQRYQSEVQK). A helical membrane pass occupies residues 143-163 (ELKGFLKPMLLVGILSGLLLL). Over 164–165 (EP) the chain is Periplasmic. The chain crosses the membrane as a helical span at residues 166–186 (DFGAAVVITMTCLALLFLAGV). Residue Arg-187 is a topological domain, cytoplasmic. The helical transmembrane segment at 188-208 (LWPFCVLLVLVAGSLILLAIL) threads the bilayer. Over 209 to 277 (SPYRLQRLTS…LFAVLAEELG (69 aa)) the chain is Periplasmic. The chain crosses the membrane as a helical span at residues 278–298 (LIGEILLMGLFVLLIGRIILI). The Cytoplasmic segment spans residues 299 to 315 (GRRAENSNQLYSAYLAY). Residues 316 to 336 (GIALWLGLQVIINIGVTAGVL) form a helical membrane-spanning segment. Topologically, residues 337–342 (PTKGLT) are periplasmic. A helical transmembrane segment spans residues 343-363 (LPFISYGGSSLLMNCLAIGVI). At 364-372 (LRIAYETEN) the chain is on the cytoplasmic side.

It belongs to the SEDS family. FtsW subfamily.

Its subcellular location is the cell inner membrane. It catalyses the reaction [GlcNAc-(1-&gt;4)-Mur2Ac(oyl-L-Ala-gamma-D-Glu-L-Lys-D-Ala-D-Ala)](n)-di-trans,octa-cis-undecaprenyl diphosphate + beta-D-GlcNAc-(1-&gt;4)-Mur2Ac(oyl-L-Ala-gamma-D-Glu-L-Lys-D-Ala-D-Ala)-di-trans,octa-cis-undecaprenyl diphosphate = [GlcNAc-(1-&gt;4)-Mur2Ac(oyl-L-Ala-gamma-D-Glu-L-Lys-D-Ala-D-Ala)](n+1)-di-trans,octa-cis-undecaprenyl diphosphate + di-trans,octa-cis-undecaprenyl diphosphate + H(+). It functions in the pathway cell wall biogenesis; peptidoglycan biosynthesis. Functionally, peptidoglycan polymerase that is essential for cell division. The chain is Probable peptidoglycan glycosyltransferase FtsW from Coxiella burnetii (strain RSA 493 / Nine Mile phase I).